Reading from the N-terminus, the 282-residue chain is Endo-1,4-beta-xylanase B (282 aa).

Residues 1–39 (MGISSILLSALIAGGALALPAAEPVSFDIRDENITLARR) form the signal peptide. Residue Asn-33 is glycosylated (N-linked (GlcNAc...) asparagine). One can recognise a GH11 domain in the interval 40 to 219 (AEAINYNQDY…GSGSGQISLS (180 aa)). Catalysis depends on Glu-117, which acts as the Nucleophile. The Proton donor role is filled by Glu-206. The tract at residues 214-245 (GQISLSKGTGGGSTTTTPTGPTSTSTAPSSGG) is disordered. A compositionally biased stretch (low complexity) spans 227 to 243 (TTTTPTGPTSTSTAPSS). The 37-residue stretch at 246–282 (TGAAQWGQCGGIGWTGPTTCVAPYTCKYENAYYSQCQ) folds into the CBM1 domain.

The protein belongs to the glycosyl hydrolase 11 (cellulase G) family.

Its subcellular location is the secreted. The catalysed reaction is Endohydrolysis of (1-&gt;4)-beta-D-xylosidic linkages in xylans.. The protein operates within glycan degradation; xylan degradation. Significantly inhibited by the wheat xylanase inhibiting protein I (XIP-I) and the proteinaceous endoxylanase Triticum aestivum xylanase inhibitors I (TAXI-I), but not TAXI-II. Endo-1,4-beta-xylanase involved in the hydrolysis of xylan, a major structural heterogeneous polysaccharide found in plant biomass representing the second most abundant polysaccharide in the biosphere, after cellulose. This chain is Endo-1,4-beta-xylanase B (xynB), found in Talaromyces funiculosus (Fruitlet core rot fungus).